The chain runs to 46 residues: Photosystem II reaction center protein Psb30 (46 aa).

Methionine 1 is subject to N-formylmethionine. Residues 1 to 20 are Lumenal-facing; it reads MGIFNGIIEFLSNINFEVIA. Residues 21–38 traverse the membrane as a helical segment; that stretch reads QLTMIAMIGIAGPMIIFL. Residues 39 to 46 lie on the Cytoplasmic side of the membrane; sequence LAVRRGNL.

The protein belongs to the Psb30/Ycf12 family. As to quaternary structure, PSII is composed of 1 copy each of membrane proteins PsbA, PsbB, PsbC, PsbD, PsbE, PsbF, PsbH, PsbI, PsbJ, PsbK, PsbL, PsbM, PsbT, PsbX, PsbY, PsbZ, Psb30/Ycf12, peripheral proteins PsbO, CyanoQ (PsbQ), PsbU, PsbV and a large number of cofactors. It forms dimeric complexes. Part of a photosystem II (PSII) assembly intermediate complex PSII-I; crystallized from a strain deleted of psbJ, it forms monomeric PSII before addition of the oxygen evolving complex. PSII-I includes 3 assembly factors not found in mature PSII (Psb27, Psb28 and Psb34). It depends on PSII binds multiple chlorophylls, carotenoids and specific lipids. as a cofactor.

It localises to the cellular thylakoid membrane. Its function is as follows. A core subunit of photosystem II (PSII). PSII is a light-driven water plastoquinone oxidoreductase, using light energy to abstract electrons from H(2)O, generating a proton gradient subsequently used for ATP formation. Helps stabilize PSII. The sequence is that of Photosystem II reaction center protein Psb30 from Thermosynechococcus vestitus (strain NIES-2133 / IAM M-273 / BP-1).